The following is an 804-amino-acid chain: Lon protease (804 aa).

The tract at residues 1-23 is disordered; the sequence is MSADSENETSESSPAGEATASTS. The region spanning 30-224 is the Lon N-terminal domain; that stretch reads LILLPVRNAV…KVLDAVAGRI (195 aa). 376-383 is a binding site for ATP; the sequence is GPPGVGKT. In terms of domain architecture, Lon proteolytic spans 612–793; sequence TSLPGVVTGL…DDAVREIIED (182 aa). Catalysis depends on residues Ser699 and Lys742.

Belongs to the peptidase S16 family. Homohexamer. Organized in a ring with a central cavity.

Its subcellular location is the cytoplasm. It carries out the reaction Hydrolysis of proteins in presence of ATP.. Functionally, ATP-dependent serine protease that mediates the selective degradation of mutant and abnormal proteins as well as certain short-lived regulatory proteins. Required for cellular homeostasis and for survival from DNA damage and developmental changes induced by stress. Degrades polypeptides processively to yield small peptide fragments that are 5 to 10 amino acids long. Binds to DNA in a double-stranded, site-specific manner. The chain is Lon protease from Paraburkholderia phytofirmans (strain DSM 17436 / LMG 22146 / PsJN) (Burkholderia phytofirmans).